A 204-amino-acid chain; its full sequence is Holliday junction branch migration complex subunit RuvA (204 aa).

Positions 1 to 67 (MIDYLYGTLD…GGVISLYGFF (67 aa)) are domain I. Positions 68–149 (TIEEREMYLL…TVNVLNKEKQ (82 aa)) are domain II. The flexible linker stretch occupies residues 150 to 154 (TGAET). Positions 155-204 (IKNTMVSEAIAGLITLGYKMQQARVAVTNVYEHNENITLEDLIKKSLQYL) are domain III.

The protein belongs to the RuvA family. Homotetramer. Forms an RuvA(8)-RuvB(12)-Holliday junction (HJ) complex. HJ DNA is sandwiched between 2 RuvA tetramers; dsDNA enters through RuvA and exits via RuvB. An RuvB hexamer assembles on each DNA strand where it exits the tetramer. Each RuvB hexamer is contacted by two RuvA subunits (via domain III) on 2 adjacent RuvB subunits; this complex drives branch migration. In the full resolvosome a probable DNA-RuvA(4)-RuvB(12)-RuvC(2) complex forms which resolves the HJ.

It is found in the cytoplasm. In terms of biological role, the RuvA-RuvB-RuvC complex processes Holliday junction (HJ) DNA during genetic recombination and DNA repair, while the RuvA-RuvB complex plays an important role in the rescue of blocked DNA replication forks via replication fork reversal (RFR). RuvA specifically binds to HJ cruciform DNA, conferring on it an open structure. The RuvB hexamer acts as an ATP-dependent pump, pulling dsDNA into and through the RuvAB complex. HJ branch migration allows RuvC to scan DNA until it finds its consensus sequence, where it cleaves and resolves the cruciform DNA. This Endomicrobium trichonymphae protein is Holliday junction branch migration complex subunit RuvA.